The chain runs to 440 residues: Thymidine phosphorylase (440 aa).

It belongs to the thymidine/pyrimidine-nucleoside phosphorylase family. In terms of assembly, homodimer.

The enzyme catalyses thymidine + phosphate = 2-deoxy-alpha-D-ribose 1-phosphate + thymine. It participates in pyrimidine metabolism; dTMP biosynthesis via salvage pathway; dTMP from thymine: step 1/2. Its function is as follows. The enzymes which catalyze the reversible phosphorolysis of pyrimidine nucleosides are involved in the degradation of these compounds and in their utilization as carbon and energy sources, or in the rescue of pyrimidine bases for nucleotide synthesis. This chain is Thymidine phosphorylase, found in Escherichia coli (strain 55989 / EAEC).